The following is a 260-amino-acid chain: Indole-3-glycerol phosphate synthase (260 aa).

It belongs to the TrpC family.

The catalysed reaction is 1-(2-carboxyphenylamino)-1-deoxy-D-ribulose 5-phosphate + H(+) = (1S,2R)-1-C-(indol-3-yl)glycerol 3-phosphate + CO2 + H2O. It functions in the pathway amino-acid biosynthesis; L-tryptophan biosynthesis; L-tryptophan from chorismate: step 4/5. The chain is Indole-3-glycerol phosphate synthase from Staphylococcus aureus (strain bovine RF122 / ET3-1).